Consider the following 351-residue polypeptide: Protein-glutamate methylesterase/protein-glutamine glutaminase 2 (351 aa).

Residues 4-121 (KVLVVDDSAL…PQDFNEYQDL (118 aa)) enclose the Response regulatory domain. Residue Asp-55 is modified to 4-aspartylphosphate. A CheB-type methylesterase domain is found at 156–348 (RVINTQLVAI…DKMLNYLASL (193 aa)). Residues Ser-168, His-194, and Asp-290 contribute to the active site.

The protein belongs to the CheB family. In terms of processing, phosphorylated by CheA. Phosphorylation of the N-terminal regulatory domain activates the methylesterase activity.

The protein localises to the cytoplasm. The catalysed reaction is [protein]-L-glutamate 5-O-methyl ester + H2O = L-glutamyl-[protein] + methanol + H(+). The enzyme catalyses L-glutaminyl-[protein] + H2O = L-glutamyl-[protein] + NH4(+). Functionally, involved in chemotaxis. Part of a chemotaxis signal transduction system that modulates chemotaxis in response to various stimuli. Catalyzes the demethylation of specific methylglutamate residues introduced into the chemoreceptors (methyl-accepting chemotaxis proteins or MCP) by CheR. Also mediates the irreversible deamidation of specific glutamine residues to glutamic acid. In Shewanella sp. (strain MR-4), this protein is Protein-glutamate methylesterase/protein-glutamine glutaminase 2.